We begin with the raw amino-acid sequence, 376 residues long: Chaperone protein DnaJ (376 aa).

The J domain occupies 4-68; it reads DYYDILGVDR…DTRSRYDQFG (65 aa). The segment at 135-217 adopts a CR-type zinc-finger fold; sequence GGEKEIRIPH…CNGAGRRQVT (83 aa). 8 residues coordinate Zn(2+): cysteine 148, cysteine 151, cysteine 165, cysteine 168, cysteine 191, cysteine 194, cysteine 205, and cysteine 208. 4 CXXCXGXG motif repeats span residues 148 to 155, 165 to 172, 191 to 198, and 205 to 212; these read CQVCKGDG, CSTCNGQG, CPACNGQG, and CEVCNGAG.

This sequence belongs to the DnaJ family. In terms of assembly, homodimer. Zn(2+) is required as a cofactor.

Its subcellular location is the cytoplasm. Functionally, participates actively in the response to hyperosmotic and heat shock by preventing the aggregation of stress-denatured proteins and by disaggregating proteins, also in an autonomous, DnaK-independent fashion. Unfolded proteins bind initially to DnaJ; upon interaction with the DnaJ-bound protein, DnaK hydrolyzes its bound ATP, resulting in the formation of a stable complex. GrpE releases ADP from DnaK; ATP binding to DnaK triggers the release of the substrate protein, thus completing the reaction cycle. Several rounds of ATP-dependent interactions between DnaJ, DnaK and GrpE are required for fully efficient folding. Also involved, together with DnaK and GrpE, in the DNA replication of plasmids through activation of initiation proteins. This chain is Chaperone protein DnaJ, found in Crocosphaera subtropica (strain ATCC 51142 / BH68) (Cyanothece sp. (strain ATCC 51142)).